A 195-amino-acid chain; its full sequence is MKVTKSEIVISAVKPEQYPDGGLPEIALAGRSNVGKSSFINSLINRKNLARTSSKPGKTQTLNFYIINDELHFVDVPGYGFAKVSKSEREAWGRMIETYMTTREELKACVQIVDLRHAPSAEDVNMYEFLKYYGIPVIVIATKADKIPKGKWDKHLKVVKQTLDMDPEDELILFSSETKKGKDEAWGAIKKMISR.

An EngB-type G domain is found at 22–195; that stretch reads GLPEIALAGR…WGAIKKMISR (174 aa). Residues 30-37, 57-61, 75-78, 142-145, and 174-176 contribute to the GTP site; these read GRSNVGKS, GKTQT, DVPG, TKAD, and FSS. Mg(2+) contacts are provided by serine 37 and threonine 59.

The protein belongs to the TRAFAC class TrmE-Era-EngA-EngB-Septin-like GTPase superfamily. EngB GTPase family. The cofactor is Mg(2+).

Functionally, necessary for normal cell division and for the maintenance of normal septation. The polypeptide is Probable GTP-binding protein EngB (Bacillus velezensis (strain DSM 23117 / BGSC 10A6 / LMG 26770 / FZB42) (Bacillus amyloliquefaciens subsp. plantarum)).